The following is a 27-amino-acid chain: Delta-actitoxin-Avd2a (27 aa).

3 disulfides stabilise this stretch: Cys-3-Cys-17, Cys-4-Cys-11, and Cys-6-Cys-22.

The protein belongs to the sea anemone short toxin (type III) family.

Its subcellular location is the secreted. The protein localises to the nematocyst. In terms of biological role, specific arthropod (crab and insect) toxin that inhibits inactivation of voltage-gated sodium channels. It competes well with the site-3 toxin LqhalphaIT (from the scorpion L.quinquestriatus (AC P17728)) on binding to cockroach neuronal membranes (Ki=21.4 nM), and inhibits the inactivation of D.melanogaster channel (DmNav1), but not that of mammalian Navs expressed in Xenopus oocytes. Its activity is synergically enhanced by ligands of receptor site-4 (Bj-xtrIT (AC P56637)). Its ability to inhibit the channel mutant DmNav1[D1701R] only decreases 5-fold, whereas the inhibition activity is completely lost by LqhalphaIT and Av2 when tested on DmNav1[D1701R]. The protein is Delta-actitoxin-Avd2a of Anemonia sulcata (Mediterranean snakelocks sea anemone).